Reading from the N-terminus, the 351-residue chain is GTPase Obg (351 aa).

The Obg domain maps to 1 to 159 (MKFLDQCKIY…RWVWLRLKLI (159 aa)). Residues 160-327 (ADAGLVGLPN…MLFELLRHIR (168 aa)) enclose the OBG-type G domain. GTP is bound by residues 166–173 (GLPNAGKS), 191–195 (FTTLT), 212–215 (DIPG), 279–282 (NKID), and 308–310 (SGA). Mg(2+) is bound by residues serine 173 and threonine 193.

This sequence belongs to the TRAFAC class OBG-HflX-like GTPase superfamily. OBG GTPase family. As to quaternary structure, monomer. Requires Mg(2+) as cofactor.

Its subcellular location is the cytoplasm. Its function is as follows. An essential GTPase which binds GTP, GDP and possibly (p)ppGpp with moderate affinity, with high nucleotide exchange rates and a fairly low GTP hydrolysis rate. Plays a role in control of the cell cycle, stress response, ribosome biogenesis and in those bacteria that undergo differentiation, in morphogenesis control. The sequence is that of GTPase Obg from Rhodospirillum centenum (strain ATCC 51521 / SW).